The following is a 342-amino-acid chain: Isopentenyl-diphosphate delta-isomerase (342 aa).

Position 11-12 (11-12 (RK)) interacts with substrate. FMN contacts are provided by residues Ser68, 69 to 71 (SMT), Ser99, and Asn128. 99–101 (SQR) is a substrate binding site. Substrate is bound at residue Gln162. Glu163 contributes to the Mg(2+) binding site. Residues Lys194, Ser219, Thr224, 275–277 (GVR), and 296–297 (AK) contribute to the FMN site.

The protein belongs to the IPP isomerase type 2 family. In terms of assembly, homooctamer. Dimer of tetramers. The cofactor is FMN. It depends on NADPH as a cofactor. Requires Mg(2+) as cofactor.

The protein localises to the cytoplasm. The enzyme catalyses isopentenyl diphosphate = dimethylallyl diphosphate. Its function is as follows. Involved in the biosynthesis of isoprenoids. Catalyzes the 1,3-allylic rearrangement of the homoallylic substrate isopentenyl (IPP) to its allylic isomer, dimethylallyl diphosphate (DMAPP). The polypeptide is Isopentenyl-diphosphate delta-isomerase (Legionella pneumophila (strain Paris)).